Here is a 357-residue protein sequence, read N- to C-terminus: uncharacterized protein (357 aa).

The region spanning 27–242 (HFGNTVTFER…VSSVRLNFPK (216 aa)) is the Radical SAM core domain. Residues cysteine 44, cysteine 50, and cysteine 53 each contribute to the [4Fe-4S] cluster site.

It depends on [4Fe-4S] cluster as a cofactor.

This is an uncharacterized protein from Methanocaldococcus jannaschii (strain ATCC 43067 / DSM 2661 / JAL-1 / JCM 10045 / NBRC 100440) (Methanococcus jannaschii).